A 679-amino-acid chain; its full sequence is Methionine--tRNA ligase (679 aa).

Zn(2+) is bound by residues C147, C150, C160, and C163. A 'KMSKS' region motif is present at residues 332 to 336; that stretch reads KISTS. T335 contacts ATP. The 102-residue stretch at 578–679 folds into the tRNA-binding domain; sequence DFMKLDIRVG…REVKPGSEVK (102 aa).

It belongs to the class-I aminoacyl-tRNA synthetase family. MetG type 1 subfamily. Homodimer. Requires Zn(2+) as cofactor.

It localises to the cytoplasm. The catalysed reaction is tRNA(Met) + L-methionine + ATP = L-methionyl-tRNA(Met) + AMP + diphosphate. Is required not only for elongation of protein synthesis but also for the initiation of all mRNA translation through initiator tRNA(fMet) aminoacylation. This is Methionine--tRNA ligase from Bacteroides fragilis (strain YCH46).